The sequence spans 655 residues: DNA topoisomerase 4 subunit B (655 aa).

Residues Tyr9, Asn49, Asp76, 116-122, and Lys340 each bind ATP; that span reads GLHGVGA. A compositionally biased stretch (basic and acidic residues) spans 387 to 397; the sequence is AARKAREEARS. The disordered stretch occupies residues 387–419; that stretch reads AARKAREEARSGKKRKKSEATLSGKLTPAGSRN. The region spanning 423–537 is the Toprim domain; sequence NELYLVEGDS…HGKVFIALPP (115 aa). The Mg(2+) site is built by Glu429, Asp502, and Asp504.

It belongs to the type II topoisomerase family. ParE type 2 subfamily. As to quaternary structure, heterotetramer composed of ParC and ParE. It depends on Mg(2+) as a cofactor. The cofactor is Mn(2+). Requires Ca(2+) as cofactor.

The catalysed reaction is ATP-dependent breakage, passage and rejoining of double-stranded DNA.. Functionally, topoisomerase IV is essential for chromosome segregation. It relaxes supercoiled DNA. Performs the decatenation events required during the replication of a circular DNA molecule. The sequence is that of DNA topoisomerase 4 subunit B from Bacillus subtilis (strain 168).